The sequence spans 211 residues: Rho-related GTP-binding protein RhoF (211 aa).

Residue M1 is modified to N-acetylmethionine. GTP is bound at residue 26–33 (GDGGCGKT). The short motif at 48–56 (YAPSVFEKY) is the Effector region element. Residues 73–77 (DTAGQ) and 131–134 (CKTD) each bind GTP. C208 is modified (cysteine methyl ester). C208 carries S-geranylgeranyl cysteine lipidation. Positions 209–211 (LLL) are cleaved as a propeptide — removed in mature form.

The protein belongs to the small GTPase superfamily. Rho family.

It is found in the cell membrane. It localises to the cytoplasm. The protein resides in the cytoskeleton. Plasma membrane-associated small GTPase which cycles between an active GTP-bound and an inactive GDP-bound state. Causes the formation of thin, actin-rich surface projections called filopodia. Functions cooperatively with CDC42 and Rac to generate additional structures, increasing the diversity of actin-based morphology. This Homo sapiens (Human) protein is Rho-related GTP-binding protein RhoF (RHOF).